Consider the following 405-residue polypeptide: L-carnitine CoA-transferase (405 aa).

Lysine 97 and arginine 104 together coordinate CoA. Aspartate 169 serves as the catalytic Nucleophile.

Belongs to the CoA-transferase III family. CaiB subfamily. As to quaternary structure, homodimer.

Its subcellular location is the cytoplasm. The catalysed reaction is crotonobetainyl-CoA + (R)-carnitine = crotonobetaine + (R)-carnitinyl-CoA. The enzyme catalyses 4-(trimethylamino)butanoyl-CoA + (R)-carnitine = (R)-carnitinyl-CoA + 4-(trimethylamino)butanoate. The protein operates within amine and polyamine metabolism; carnitine metabolism. Functionally, catalyzes the reversible transfer of the CoA moiety from gamma-butyrobetainyl-CoA to L-carnitine to generate L-carnitinyl-CoA and gamma-butyrobetaine. Is also able to catalyze the reversible transfer of the CoA moiety from gamma-butyrobetainyl-CoA or L-carnitinyl-CoA to crotonobetaine to generate crotonobetainyl-CoA. The protein is L-carnitine CoA-transferase of Escherichia coli O139:H28 (strain E24377A / ETEC).